The chain runs to 367 residues: Germination protease (367 aa).

The propeptide occupies 1–15; sequence MKEPLDLSKYSVRTD.

This sequence belongs to the peptidase A25 family. As to quaternary structure, homotetramer. Autoproteolytically processed. The inactive tetrameric zymogen termed p46 autoprocesses to a smaller form termed p41, which is active only during spore germination.

It carries out the reaction Endopeptidase action with P4 Glu or Asp, P1 preferably Glu &gt; Asp, P1' hydrophobic and P2' Ala.. In terms of biological role, initiates the rapid degradation of small, acid-soluble proteins during spore germination. The sequence is that of Germination protease from Bacillus mycoides (strain KBAB4) (Bacillus weihenstephanensis).